The chain runs to 154 residues: UPF0178 protein RC1_2062 (154 aa).

It belongs to the UPF0178 family.

This Rhodospirillum centenum (strain ATCC 51521 / SW) protein is UPF0178 protein RC1_2062.